Here is a 282-residue protein sequence, read N- to C-terminus: NADPH-dependent 7-cyano-7-deazaguanine reductase (282 aa).

88 to 90 (IES) provides a ligand contact to substrate. 90–91 (SK) provides a ligand contact to NADPH. The active-site Thioimide intermediate is the Cys-190. Asp-197 (proton donor) is an active-site residue. 229 to 230 (HE) contacts substrate. 258–259 (RG) provides a ligand contact to NADPH.

It belongs to the GTP cyclohydrolase I family. QueF type 2 subfamily. Homodimer.

It localises to the cytoplasm. The enzyme catalyses 7-aminomethyl-7-carbaguanine + 2 NADP(+) = 7-cyano-7-deazaguanine + 2 NADPH + 3 H(+). It participates in tRNA modification; tRNA-queuosine biosynthesis. Functionally, catalyzes the NADPH-dependent reduction of 7-cyano-7-deazaguanine (preQ0) to 7-aminomethyl-7-deazaguanine (preQ1). The protein is NADPH-dependent 7-cyano-7-deazaguanine reductase of Escherichia coli O9:H4 (strain HS).